Reading from the N-terminus, the 221-residue chain is Transmembrane emp24 domain-containing protein 3 (221 aa).

Residues M1 to G30 form the signal peptide. At A31–S184 the chain is on the lumenal side. The GOLD domain occupies K42–V124. R103 is subject to Dimethylated arginine. A helical membrane pass occupies residues Y185–L205. Residues K206–S221 lie on the Cytoplasmic side of the membrane. The short motif at F208–F209 is the COPII vesicle coat-binding element. Positions F208–S221 match the COPI vesicle coat-binding motif.

Belongs to the EMP24/GP25L family. In terms of assembly, monomer in endoplasmic reticulum, endoplasmic reticulum-Golgi intermediate compartment and cis-Golgi network. Interacts (via C-terminus) with COPG1; the interaction involves dimeric TMED3; however, there are conflicting reports on the interaction. Interacts with GORASP1 and GORASP2.

The protein resides in the endoplasmic reticulum-Golgi intermediate compartment membrane. The protein localises to the golgi apparatus. It is found in the cis-Golgi network membrane. Its subcellular location is the golgi stack membrane. It localises to the endoplasmic reticulum membrane. The protein resides in the cytoplasmic vesicle. The protein localises to the COPI-coated vesicle membrane. Potential role in vesicular protein trafficking, mainly in the early secretory pathway. Contributes to the coupled localization of TMED2 and TMED10 in the cis-Golgi network. The protein is Transmembrane emp24 domain-containing protein 3 (Tmed3) of Rattus norvegicus (Rat).